The following is a 510-amino-acid chain: NAD(P)H-quinone oxidoreductase subunit 2 A, chloroplastic (510 aa).

13 consecutive transmembrane segments (helical) span residues Leu26–Leu46, Ile57–Phe77, Ile99–Ile119, Met124–Cys144, Leu149–Tyr169, Tyr183–Gly203, Pro227–Ala247, Trp295–Ile315, Met323–Gly342, Tyr354–Leu374, Ala395–Phe415, Leu418–Phe438, and Met484–Ile504.

It belongs to the complex I subunit 2 family. NDH is composed of at least 16 different subunits, 5 of which are encoded in the nucleus.

Its subcellular location is the plastid. The protein resides in the chloroplast thylakoid membrane. It carries out the reaction a plastoquinone + NADH + (n+1) H(+)(in) = a plastoquinol + NAD(+) + n H(+)(out). It catalyses the reaction a plastoquinone + NADPH + (n+1) H(+)(in) = a plastoquinol + NADP(+) + n H(+)(out). Its function is as follows. NDH shuttles electrons from NAD(P)H:plastoquinone, via FMN and iron-sulfur (Fe-S) centers, to quinones in the photosynthetic chain and possibly in a chloroplast respiratory chain. The immediate electron acceptor for the enzyme in this species is believed to be plastoquinone. Couples the redox reaction to proton translocation, and thus conserves the redox energy in a proton gradient. This Oenothera biennis (German evening primrose) protein is NAD(P)H-quinone oxidoreductase subunit 2 A, chloroplastic.